A 66-amino-acid chain; its full sequence is GRDGYIAQPENCVYHCFPGSSGCDTLCKEKGATSGHCGFLPGSGVACWCDNLPNKVPIVVGGEKCH.

Residues 2 to 66 (RDGYIAQPEN…PIVVGGEKCH (65 aa)) enclose the LCN-type CS-alpha/beta domain. 4 disulfides stabilise this stretch: C12–C65, C16–C37, C23–C47, and C27–C49.

The protein belongs to the long (4 C-C) scorpion toxin superfamily. Sodium channel inhibitor family. Alpha subfamily. In terms of tissue distribution, expressed by the venom gland.

The protein resides in the secreted. Alpha toxins bind voltage-independently at site-3 of sodium channels (Nav) and inhibit the inactivation of the activated channels, thereby blocking neuronal transmission. As it competes neither with the classical alpha-toxin AaH2 nor the beta-toxin Css2, this toxin is an alpha-like toxin. This Buthus occitanus mardochei (Moroccan scorpion) protein is Alpha-like toxin Bom3.